We begin with the raw amino-acid sequence, 574 residues long: Septation ring formation regulator EzrA (574 aa).

Residues 1 to 7 (MSSGLIL) are Extracellular-facing. A helical transmembrane segment spans residues 8 to 26 (LIVAIVLLVIIAYLVGVII). At 27–574 (RKRNDTLITS…YEKTRERIRF (548 aa)) the chain is on the cytoplasmic side. 4 coiled-coil regions span residues 102–131 (NFIR…REAL), 161–190 (ENED…FVAL), 276–379 (VTLD…QQEK), and 459–493 (QLEA…NLEE).

This sequence belongs to the EzrA family.

It localises to the cell membrane. Functionally, negative regulator of FtsZ ring formation; modulates the frequency and position of FtsZ ring formation. Inhibits FtsZ ring formation at polar sites. Interacts either with FtsZ or with one of its binding partners to promote depolymerization. This is Septation ring formation regulator EzrA from Streptococcus equi subsp. zooepidemicus (strain MGCS10565).